The following is a 398-amino-acid chain: Succinate--CoA ligase [ADP-forming] subunit beta (398 aa).

The 246-residue stretch at Lys-9–Glu-254 folds into the ATP-grasp domain. ATP contacts are provided by residues Lys-46, Gly-53–Gly-55, Glu-109, Ala-112, and Glu-117. Asn-209 and Asp-223 together coordinate Mg(2+). Substrate-binding positions include Asn-274 and Gly-331–Met-333.

The protein belongs to the succinate/malate CoA ligase beta subunit family. Heterotetramer of two alpha and two beta subunits. Requires Mg(2+) as cofactor.

The catalysed reaction is succinate + ATP + CoA = succinyl-CoA + ADP + phosphate. It carries out the reaction GTP + succinate + CoA = succinyl-CoA + GDP + phosphate. The protein operates within carbohydrate metabolism; tricarboxylic acid cycle; succinate from succinyl-CoA (ligase route): step 1/1. In terms of biological role, succinyl-CoA synthetase functions in the citric acid cycle (TCA), coupling the hydrolysis of succinyl-CoA to the synthesis of either ATP or GTP and thus represents the only step of substrate-level phosphorylation in the TCA. The beta subunit provides nucleotide specificity of the enzyme and binds the substrate succinate, while the binding sites for coenzyme A and phosphate are found in the alpha subunit. The polypeptide is Succinate--CoA ligase [ADP-forming] subunit beta (Rhizobium meliloti (strain 1021) (Ensifer meliloti)).